A 243-amino-acid chain; its full sequence is NAD-dependent protein deacetylase (243 aa).

The 243-residue stretch at Met-1–Glu-243 folds into the Deacetylase sirtuin-type domain. NAD(+)-binding residues include Ala-24, Phe-35, Arg-36, Gln-105, Ile-107, Asp-108, and His-123. Phe-35 lines the nicotinamide pocket. Nicotinamide is bound by residues Ile-107 and Asp-108. His-123 serves as the catalytic Proton acceptor. Zn(2+)-binding residues include Cys-131, Cys-134, Cys-151, and Cys-154. NAD(+) contacts are provided by Ser-192, Ser-193, Asn-215, and Asp-232.

Belongs to the sirtuin family. Class U subfamily. Zn(2+) is required as a cofactor.

It is found in the cytoplasm. The catalysed reaction is N(6)-acetyl-L-lysyl-[protein] + NAD(+) + H2O = 2''-O-acetyl-ADP-D-ribose + nicotinamide + L-lysyl-[protein]. Its function is as follows. NAD-dependent protein deacetylase which modulates the activities of several enzymes which are inactive in their acetylated form. In Staphylococcus aureus (strain MRSA252), this protein is NAD-dependent protein deacetylase.